The sequence spans 329 residues: GTPase Obg (329 aa).

Positions 1-159 (MQFIDQARIT…WPLQLELKLL (159 aa)) constitute an Obg domain. Residues 160-328 (AEVGIIGLPN…LLDQVWQLLG (169 aa)) enclose the OBG-type G domain. Residues 166–173 (GLPNAGKS), 191–195 (FTTLV), 213–216 (DIPG), 280–283 (NKLE), and 309–311 (SAV) each bind ATP. Residues Ser-173 and Thr-193 each coordinate Mg(2+).

This sequence belongs to the TRAFAC class OBG-HflX-like GTPase superfamily. OBG GTPase family. Monomer. It depends on Mg(2+) as a cofactor.

It is found in the cytoplasm. In terms of biological role, an essential GTPase which binds GTP, GDP and possibly (p)ppGpp with moderate affinity, with high nucleotide exchange rates and a fairly low GTP hydrolysis rate. Plays a role in control of the cell cycle, stress response, ribosome biogenesis and in those bacteria that undergo differentiation, in morphogenesis control. The protein is GTPase Obg of Synechococcus sp. (strain WH7803).